A 68-amino-acid polypeptide reads, in one-letter code: Protein SlyX homolog (68 aa).

The protein belongs to the SlyX family.

The sequence is that of Protein SlyX homolog from Pseudomonas syringae pv. tomato (strain ATCC BAA-871 / DC3000).